The following is a 614-amino-acid chain: DNA mismatch repair protein MutL (614 aa).

This sequence belongs to the DNA mismatch repair MutL/HexB family.

Its function is as follows. This protein is involved in the repair of mismatches in DNA. It is required for dam-dependent methyl-directed DNA mismatch repair. May act as a 'molecular matchmaker', a protein that promotes the formation of a stable complex between two or more DNA-binding proteins in an ATP-dependent manner without itself being part of a final effector complex. This chain is DNA mismatch repair protein MutL, found in Thermoanaerobacter sp. (strain X514).